Consider the following 365-residue polypeptide: Glutamate 5-kinase 1 (365 aa).

Position 9 (Lys-9) interacts with ATP. Substrate contacts are provided by Ser-49, Asp-136, and Asn-148. Residues 168–169 (TD) and 210–216 (TGGMKSK) contribute to the ATP site. One can recognise a PUA domain in the interval 276 to 353 (SGKITVDEGA…DEFHHEEGIE (78 aa)).

It belongs to the glutamate 5-kinase family.

The protein localises to the cytoplasm. The enzyme catalyses L-glutamate + ATP = L-glutamyl 5-phosphate + ADP. Its pathway is amino-acid biosynthesis; L-proline biosynthesis; L-glutamate 5-semialdehyde from L-glutamate: step 1/2. In terms of biological role, catalyzes the transfer of a phosphate group to glutamate to form L-glutamate 5-phosphate. The polypeptide is Glutamate 5-kinase 1 (Bacillus licheniformis (strain ATCC 14580 / DSM 13 / JCM 2505 / CCUG 7422 / NBRC 12200 / NCIMB 9375 / NCTC 10341 / NRRL NRS-1264 / Gibson 46)).